Here is a 290-residue protein sequence, read N- to C-terminus: Syntaxin-1A (290 aa).

The tract at residues 1–21 (MTKDRLAALQAAQSDDEDMPE) is disordered. The Cytoplasmic portion of the chain corresponds to 1 to 267 (MTKDRLAALQ…KYQSKARRKK (267 aa)). In terms of domain architecture, t-SNARE coiled-coil homology spans 194–256 (LADIEARHAD…QTATQDTKKA (63 aa)). A helical; Anchor for type IV membrane protein transmembrane segment spans residues 268 to 289 (IWIAICVLIAIIILVVFLAIYL). Thr290 is a topological domain (vesicular).

It belongs to the syntaxin family. (Microbial infection) Targeted and hydrolyzed by the light chain (LC) of P.bifermentans PMP1. Cleavage probably inhibits neurotransmitter release.

The protein localises to the cytoplasmic vesicle. It localises to the secretory vesicle. Its subcellular location is the synaptic vesicle membrane. Plays a critical role in several secretory processes. This Anopheles gambiae (African malaria mosquito) protein is Syntaxin-1A.